We begin with the raw amino-acid sequence, 493 residues long: Cobyric acid synthase (493 aa).

Residues 246–440 enclose the GATase cobBQ-type domain; sequence PIDIAVIKMP…IHGVFDGVAF (195 aa). Cys-326 functions as the Nucleophile in the catalytic mechanism. Residue His-432 is part of the active site.

The protein belongs to the CobB/CobQ family. CobQ subfamily.

It participates in cofactor biosynthesis; adenosylcobalamin biosynthesis. Functionally, catalyzes amidations at positions B, D, E, and G on adenosylcobyrinic A,C-diamide. NH(2) groups are provided by glutamine, and one molecule of ATP is hydrogenolyzed for each amidation. In Clostridium botulinum (strain Loch Maree / Type A3), this protein is Cobyric acid synthase.